The sequence spans 166 residues: Small ribosomal subunit protein uS5 (166 aa).

The S5 DRBM domain occupies 11–74 (LQEKLIAVNR…EKARRNMMNV (64 aa)).

The protein belongs to the universal ribosomal protein uS5 family. In terms of assembly, part of the 30S ribosomal subunit. Contacts proteins S4 and S8.

In terms of biological role, with S4 and S12 plays an important role in translational accuracy. Functionally, located at the back of the 30S subunit body where it stabilizes the conformation of the head with respect to the body. The sequence is that of Small ribosomal subunit protein uS5 from Pectobacterium atrosepticum (strain SCRI 1043 / ATCC BAA-672) (Erwinia carotovora subsp. atroseptica).